The primary structure comprises 260 residues: MSTNNSVLVLKVGGALLQCEMGMARLMDTAAAMLANGQKVLMVHGGGCLVDEQLAANGMETVKLEGLRVTPPEQMPIIAGALAGTSNKILQGAATKAGIVSVGMSLADGNTVSAKIKDERLGLVGEVTPKDGTYLKFILEQGWMPICSSIAMMDDGQMLNVNADQAATALAKLVGGKLVLLSDVSGVLDGKGQLIHSLNGKQIADLVKQGVIEKGMKVKVEAALEVAQWMGQAVQVASWRDASQLIALAKGEAVGTQIQP.

Substrate-binding positions include Gly46–Gly47, Arg68, and Asn160.

It belongs to the acetylglutamate kinase family. ArgB subfamily.

It localises to the cytoplasm. The catalysed reaction is N-acetyl-L-glutamate + ATP = N-acetyl-L-glutamyl 5-phosphate + ADP. The protein operates within amino-acid biosynthesis; L-arginine biosynthesis; N(2)-acetyl-L-ornithine from L-glutamate: step 2/4. Functionally, catalyzes the ATP-dependent phosphorylation of N-acetyl-L-glutamate. The chain is Acetylglutamate kinase from Shewanella putrefaciens (strain CN-32 / ATCC BAA-453).